We begin with the raw amino-acid sequence, 233 residues long: uncharacterized protein (233 aa).

The Zn(2+) site is built by His-64, His-66, Asp-68, His-69, His-143, Asp-162, and His-212.

The protein belongs to the metallo-beta-lactamase superfamily. Glyoxalase II family. It depends on Zn(2+) as a cofactor.

This is an uncharacterized protein from Bacillus subtilis (strain 168).